The following is a 157-amino-acid chain: Universal stress protein Sll1654 (157 aa).

Belongs to the universal stress protein A family.

The protein is Universal stress protein Sll1654 of Synechocystis sp. (strain ATCC 27184 / PCC 6803 / Kazusa).